The following is a 119-amino-acid chain: Large ribosomal subunit protein eL31 (119 aa).

It belongs to the eukaryotic ribosomal protein eL31 family.

In Cyanophora paradoxa, this protein is Large ribosomal subunit protein eL31 (RPL31).